Reading from the N-terminus, the 595-residue chain is NADPH-dependent diflavin oxidoreductase 1 (595 aa).

Residues 6–150 (VLVLYGSQTG…VIDPWLLSFW (145 aa)) form the Flavodoxin-like domain. FMN contacts are provided by residues 12–17 (SQTGTA), 59–62 (ATTG), 97–106 (LGDSSYPKFN), and Asp132. The FAD-binding FR-type domain maps to 204 to 444 (LRPFPAPLVF…WVKKGSLKFP (241 aa)). Residues Arg348, 380 to 383 (RSFS), and 414 to 417 (GLCS) each bind FAD. NADP(+) contacts are provided by residues Thr458, 513–514 (SR), and 519–523 (KVYVQ). Trp594 lines the FAD pocket.

This sequence belongs to the NADPH-dependent diflavin oxidoreductase NDOR1 family. It in the N-terminal section; belongs to the flavodoxin family. The protein in the C-terminal section; belongs to the flavoprotein pyridine nucleotide cytochrome reductase family. Interacts with ciapin1; as part of the cytosolic iron-sulfur (Fe-S) protein assembly (CIA) machinery. It depends on FAD as a cofactor. FMN is required as a cofactor.

The protein localises to the cytoplasm. The protein resides in the perinuclear region. The catalysed reaction is 2 oxidized [2Fe-2S]-[protein] + NADPH = 2 reduced [2Fe-2S]-[protein] + NADP(+) + H(+). NADPH-dependent reductase which is a central component of the cytosolic iron-sulfur (Fe-S) protein assembly (CIA) machinery. Transfers electrons from NADPH via its FAD and FMN prosthetic groups to the [2Fe-2S] cluster of ciapin1, another key component of the CIA machinery. In turn, this reduced cluster provides electrons for assembly of cytosolic iron-sulfur cluster proteins. It can also reduce the [2Fe-2S] cluster of cisd1 and activate this protein implicated in Fe/S cluster repair. The chain is NADPH-dependent diflavin oxidoreductase 1 from Danio rerio (Zebrafish).